The chain runs to 151 residues: IFN signaling evasion protein OPG029 (151 aa).

This sequence belongs to the orthopoxvirus OPG029 family. Interacts with host TANK, TBKBP1 and AZI2; these interactions prevent interferon production. Interacts with host STAT2.

In terms of biological role, prevents establishment of cellular antiviral state by blocking virus-induced phosphorylation and activation of interferon regulatory factors 3/IRF3 and 7/IRF7, transcription factors critical for the induction of interferons alpha and beta. This blockage is produced through the inhibition of host TBK1, by binding host TBK1 adapter proteins TBKBP1 and AZI2, thereby producing a strong inhibition of the phosphorylation and activation of IRF3 and IRF7. Also acts as an inhibitor of the cellular response to type I IFN by interacting with host STAT2. Mechanistically, exerts its inhibitory effect after host ISGF3 complex (composed of STAT1, STAT2 and IRF9) binding to the interferon stimulated response element (ISRE). The protein is IFN signaling evasion protein OPG029 (OPG029) of Homo sapiens (Human).